Consider the following 509-residue polypeptide: Cruciferin CRU1 (509 aa).

The first 23 residues, 1 to 23 (MVKVPHLLVATFGVLLVLNGCLA), serve as a signal peptide directing secretion. An intrachain disulfide couples Cys-37 to Cys-70. The Cupin type-1 1 domain occupies 42–271 (LDVLQPTETI…ALKIDVRLAQ (230 aa)). 2 positions are modified to phosphoserine: Ser-53 and Ser-97. An intrachain disulfide couples Cys-113 to Cys-326. Thr-116 carries the phosphothreonine modification. Disordered stretches follow at residues 119–175 (DSQP…GFRD), 230–249 (RLAGNNPQGGSQQQQQQQQN), and 301–321 (YESEQWRHPRGPPQSPQDNGL). Positions 124–172 (QGQQQGQPWQGQQGQQGQQGQQGQQGQQGQQGQQGQQGQQGQQGQQQQG) are enriched in low complexity. The region spanning 332–481 (ENIDDPARAD…AFQISLEEAR (150 aa)) is the Cupin type-1 2 domain. Phosphoserine is present on Ser-352. A phosphothreonine mark is found at Thr-445 and Thr-487.

This sequence belongs to the 11S seed storage protein (globulins) family. In terms of assembly, hexamer; each subunit is composed of an acidic and a basic chain derived from a single precursor and linked by a disulfide bond.

In terms of biological role, this is a seed storage protein. The polypeptide is Cruciferin CRU1 (CRU1) (Brassica napus (Rape)).